The sequence spans 214 residues: UPF0502 protein Pput_3252 (214 aa).

This sequence belongs to the UPF0502 family.

The chain is UPF0502 protein Pput_3252 from Pseudomonas putida (strain ATCC 700007 / DSM 6899 / JCM 31910 / BCRC 17059 / LMG 24140 / F1).